A 642-amino-acid polypeptide reads, in one-letter code: MSDRPHTPLLDQVTRPADLKRFSDAQLTQLAGELRAETVSAVSVTGGHLGAGLGVVELTVALHAVFDTPRDKVIWDVGHQCYPHKILTERRDRIRTLRMKDGLSGFTKRSESPYDPFGAAHSSTSISAALGFAVARDLGGVTPEGLGDAIAVIGDGSMSAGMAFEAMNNAGHLKKRLIVILNDNEMSIAPPVGALSNYLSRLYAEEPFQELKAAAKGAVSLLPEPFREGAKRAKEMLKGMAVGGTLFEELGFSYIGPIDGHDMGQLLPVLRTVKARATGPILLHVLTKKGKGYAPAERARDRGHATAKFDVVTGEQKKAPSNAPSYTAVFGKALVDQAARDDKIVAVTAAMPDGTGLNLFAERYPSRCFDVGIAEQHGVTFSAALAAGGLKPFCAMYSTFLQRGYDQVVHDVAIQRLPVRFAIDRAGLVGADGATHAGSFDIAYLANLPGMVVMAAADEAELVHMVATAAAHDDGPIAFRYPRGEGVGVEMPELGKVLEIGKGRMIQKGARVALLSFGTRLTEVQKAAEALAARGITPTIADARFAKPLDRDLILNLAHDHEALITIEEGAVGGFGSHVAQLLADEGVFDHGLKFRSMVLPDIFIDQSSPADMYAVAGMNAPQIEAKVLDVLGIGRIGEKRA.

Residues His-79 and 120 to 122 each bind thiamine diphosphate; that span reads AHS. Residue Asp-155 participates in Mg(2+) binding. Residues 156-157, Asn-184, Tyr-293, and Glu-375 each bind thiamine diphosphate; that span reads GS. Asn-184 contributes to the Mg(2+) binding site.

The protein belongs to the transketolase family. DXPS subfamily. In terms of assembly, homodimer. Requires Mg(2+) as cofactor. Thiamine diphosphate serves as cofactor.

The catalysed reaction is D-glyceraldehyde 3-phosphate + pyruvate + H(+) = 1-deoxy-D-xylulose 5-phosphate + CO2. Its pathway is metabolic intermediate biosynthesis; 1-deoxy-D-xylulose 5-phosphate biosynthesis; 1-deoxy-D-xylulose 5-phosphate from D-glyceraldehyde 3-phosphate and pyruvate: step 1/1. Catalyzes the acyloin condensation reaction between C atoms 2 and 3 of pyruvate and glyceraldehyde 3-phosphate to yield 1-deoxy-D-xylulose-5-phosphate (DXP). This is 1-deoxy-D-xylulose-5-phosphate synthase from Ruegeria pomeroyi (strain ATCC 700808 / DSM 15171 / DSS-3) (Silicibacter pomeroyi).